Here is a 103-residue protein sequence, read N- to C-terminus: BLOC-1-related complex subunit 7 (103 aa).

It belongs to the BORCS7 family.

The protein localises to the lysosome membrane. Its function is as follows. As part of a BORC-like complex may play a role in lysosomes movement and localization at the cell periphery. Associated with the cytosolic face of lysosomes, this complex may couple lysosomes to microtubule plus-end-directed kinesin motor. The chain is BLOC-1-related complex subunit 7 from Danio rerio (Zebrafish).